The following is a 360-amino-acid chain: DNA replication and repair protein RecF (360 aa).

30 to 37 (GQNGSGKT) contacts ATP.

The protein belongs to the RecF family.

The protein resides in the cytoplasm. The RecF protein is involved in DNA metabolism; it is required for DNA replication and normal SOS inducibility. RecF binds preferentially to single-stranded, linear DNA. It also seems to bind ATP. The protein is DNA replication and repair protein RecF of Shewanella loihica (strain ATCC BAA-1088 / PV-4).